A 489-amino-acid chain; its full sequence is Bifunctional protein HldE (489 aa).

The tract at residues 1–328 (METENIHSFD…ELKAQLQDQP (328 aa)) is ribokinase. 206–209 (NKKE) provides a ligand contact to ATP. Aspartate 276 is an active-site residue. Residues 357–489 (LTNGCFDLLH…IIQDIRNGRG (133 aa)) are cytidylyltransferase.

This sequence in the N-terminal section; belongs to the carbohydrate kinase PfkB family. The protein in the C-terminal section; belongs to the cytidylyltransferase family. Homodimer.

It carries out the reaction D-glycero-beta-D-manno-heptose 7-phosphate + ATP = D-glycero-beta-D-manno-heptose 1,7-bisphosphate + ADP + H(+). The enzyme catalyses D-glycero-beta-D-manno-heptose 1-phosphate + ATP + H(+) = ADP-D-glycero-beta-D-manno-heptose + diphosphate. It participates in nucleotide-sugar biosynthesis; ADP-L-glycero-beta-D-manno-heptose biosynthesis; ADP-L-glycero-beta-D-manno-heptose from D-glycero-beta-D-manno-heptose 7-phosphate: step 1/4. Its pathway is nucleotide-sugar biosynthesis; ADP-L-glycero-beta-D-manno-heptose biosynthesis; ADP-L-glycero-beta-D-manno-heptose from D-glycero-beta-D-manno-heptose 7-phosphate: step 3/4. In terms of biological role, catalyzes the phosphorylation of D-glycero-D-manno-heptose 7-phosphate at the C-1 position to selectively form D-glycero-beta-D-manno-heptose-1,7-bisphosphate. Its function is as follows. Catalyzes the ADP transfer from ATP to D-glycero-beta-D-manno-heptose 1-phosphate, yielding ADP-D-glycero-beta-D-manno-heptose. This Desulfatibacillum aliphaticivorans protein is Bifunctional protein HldE.